We begin with the raw amino-acid sequence, 186 residues long: Ribosome-recycling factor (186 aa).

Belongs to the RRF family.

It localises to the cytoplasm. In terms of biological role, responsible for the release of ribosomes from messenger RNA at the termination of protein biosynthesis. May increase the efficiency of translation by recycling ribosomes from one round of translation to another. This is Ribosome-recycling factor from Chlorobium phaeobacteroides (strain DSM 266 / SMG 266 / 2430).